Consider the following 93-residue polypeptide: Sec-independent protein translocase protein TatA (93 aa).

Residues 1–21 (MGSLSPWHWAILAVVVILLFG) form a helical membrane-spanning segment. Residues 45–93 (EMQSENKTETSALGAQSESSAANPTPVQSQRVDPPAPSEQGHSEARPAS) are disordered. Residues 53–75 (ETSALGAQSESSAANPTPVQSQR) show a composition bias toward polar residues.

It belongs to the TatA/E family. In terms of assembly, the Tat system comprises two distinct complexes: a TatABC complex, containing multiple copies of TatA, TatB and TatC subunits, and a separate TatA complex, containing only TatA subunits. Substrates initially bind to the TatABC complex, which probably triggers association of the separate TatA complex to form the active translocon.

It localises to the cell membrane. Its function is as follows. Part of the twin-arginine translocation (Tat) system that transports large folded proteins containing a characteristic twin-arginine motif in their signal peptide across membranes. TatA could form the protein-conducting channel of the Tat system. This is Sec-independent protein translocase protein TatA from Mycolicibacterium paratuberculosis (strain ATCC BAA-968 / K-10) (Mycobacterium paratuberculosis).